The chain runs to 291 residues: Nucleotide-binding protein jk1004 (291 aa).

ATP is bound at residue 16 to 23; it reads GMSGAGRR. GTP is bound at residue 67–70; the sequence is DVRS.

It belongs to the RapZ-like family.

Functionally, displays ATPase and GTPase activities. In Corynebacterium jeikeium (strain K411), this protein is Nucleotide-binding protein jk1004.